A 111-amino-acid polypeptide reads, in one-letter code: TPR repeat-containing protein associated with Hsp90 (111 aa).

S2 carries the post-translational modification N-acetylserine. 2 TPR repeats span residues 4 to 37 (FEKQKEQGNSLFKQGLYREAVHCYDQLITAQPQN) and 39 to 71 (VGYSNKAMALIKLGEYTQAIQMCQQGLRYTSTA).

In terms of assembly, component of the R2TP complex composed at least of RVB1, RVB2, TAH1 and PIH1. Also interacts with HSP90.

The protein localises to the cytoplasm. Its subcellular location is the nucleus. This Saccharomyces cerevisiae (strain ATCC 204508 / S288c) (Baker's yeast) protein is TPR repeat-containing protein associated with Hsp90 (TAH1).